The sequence spans 308 residues: Transaldolase (308 aa).

The active-site Schiff-base intermediate with substrate is Lys-125.

The protein belongs to the transaldolase family. Type 1 subfamily. As to quaternary structure, homodimer.

It localises to the cytoplasm. It carries out the reaction D-sedoheptulose 7-phosphate + D-glyceraldehyde 3-phosphate = D-erythrose 4-phosphate + beta-D-fructose 6-phosphate. Its pathway is carbohydrate degradation; pentose phosphate pathway; D-glyceraldehyde 3-phosphate and beta-D-fructose 6-phosphate from D-ribose 5-phosphate and D-xylulose 5-phosphate (non-oxidative stage): step 2/3. Functionally, transaldolase is important for the balance of metabolites in the pentose-phosphate pathway. The protein is Transaldolase of Pseudomonas putida (strain GB-1).